Here is a 188-residue protein sequence, read N- to C-terminus: Protein GrpE (188 aa).

This sequence belongs to the GrpE family. Homodimer.

Its subcellular location is the cytoplasm. Its function is as follows. Participates actively in the response to hyperosmotic and heat shock by preventing the aggregation of stress-denatured proteins, in association with DnaK and GrpE. It is the nucleotide exchange factor for DnaK and may function as a thermosensor. Unfolded proteins bind initially to DnaJ; upon interaction with the DnaJ-bound protein, DnaK hydrolyzes its bound ATP, resulting in the formation of a stable complex. GrpE releases ADP from DnaK; ATP binding to DnaK triggers the release of the substrate protein, thus completing the reaction cycle. Several rounds of ATP-dependent interactions between DnaJ, DnaK and GrpE are required for fully efficient folding. This is Protein GrpE from Chromobacterium violaceum (strain ATCC 12472 / DSM 30191 / JCM 1249 / CCUG 213 / NBRC 12614 / NCIMB 9131 / NCTC 9757 / MK).